A 91-amino-acid chain; its full sequence is Probable Fe(2+)-trafficking protein (91 aa).

The protein belongs to the Fe(2+)-trafficking protein family.

Its function is as follows. Could be a mediator in iron transactions between iron acquisition and iron-requiring processes, such as synthesis and/or repair of Fe-S clusters in biosynthetic enzymes. The sequence is that of Probable Fe(2+)-trafficking protein from Thiobacillus denitrificans (strain ATCC 25259 / T1).